The sequence spans 430 residues: Glutamyl-tRNA reductase (430 aa).

Substrate contacts are provided by residues 49 to 52 (TCNR), S109, 114 to 116 (EGQ), and Q120. Catalysis depends on C50, which acts as the Nucleophile. 189-194 (GAGKMA) is an NADP(+) binding site.

Belongs to the glutamyl-tRNA reductase family. Homodimer.

The catalysed reaction is (S)-4-amino-5-oxopentanoate + tRNA(Glu) + NADP(+) = L-glutamyl-tRNA(Glu) + NADPH + H(+). The protein operates within porphyrin-containing compound metabolism; protoporphyrin-IX biosynthesis; 5-aminolevulinate from L-glutamyl-tRNA(Glu): step 1/2. It participates in porphyrin-containing compound metabolism; chlorophyll biosynthesis. In terms of biological role, catalyzes the NADPH-dependent reduction of glutamyl-tRNA(Glu) to glutamate 1-semialdehyde (GSA). The chain is Glutamyl-tRNA reductase from Crocosphaera subtropica (strain ATCC 51142 / BH68) (Cyanothece sp. (strain ATCC 51142)).